Here is a 273-residue protein sequence, read N- to C-terminus: Large ribosomal subunit protein uL2 (273 aa).

Disordered stretches follow at residues 28-53 (KPFA…TTRH) and 221-273 (RGTA…RRSK). A compositionally biased stretch (low complexity) spans 39 to 48 (KSGGRNNNGR).

It belongs to the universal ribosomal protein uL2 family. As to quaternary structure, part of the 50S ribosomal subunit. Forms a bridge to the 30S subunit in the 70S ribosome.

In terms of biological role, one of the primary rRNA binding proteins. Required for association of the 30S and 50S subunits to form the 70S ribosome, for tRNA binding and peptide bond formation. It has been suggested to have peptidyltransferase activity; this is somewhat controversial. Makes several contacts with the 16S rRNA in the 70S ribosome. In Klebsiella pneumoniae (strain 342), this protein is Large ribosomal subunit protein uL2.